A 177-amino-acid chain; its full sequence is Chorismate pyruvate-lyase (177 aa).

Residues M36, R78, L116, and E157 each coordinate substrate.

This sequence belongs to the UbiC family. Monomer.

It localises to the cytoplasm. The enzyme catalyses chorismate = 4-hydroxybenzoate + pyruvate. It functions in the pathway cofactor biosynthesis; ubiquinone biosynthesis. Its function is as follows. Removes the pyruvyl group from chorismate, with concomitant aromatization of the ring, to provide 4-hydroxybenzoate (4HB) for the ubiquinone pathway. The chain is Chorismate pyruvate-lyase from Pectobacterium atrosepticum (strain SCRI 1043 / ATCC BAA-672) (Erwinia carotovora subsp. atroseptica).